Consider the following 930-residue polypeptide: Isoleucine--tRNA ligase (930 aa).

A 'HIGH' region motif is present at residues 57-67; it reads PYANGNIHVGH. L-isoleucyl-5'-AMP is bound at residue glutamate 554. The short motif at 595–599 is the 'KMSKS' region element; it reads KMSKS. Lysine 598 contributes to the ATP binding site. 4 residues coordinate Zn(2+): cysteine 888, cysteine 891, cysteine 908, and cysteine 911.

Belongs to the class-I aminoacyl-tRNA synthetase family. IleS type 1 subfamily. In terms of assembly, monomer. It depends on Zn(2+) as a cofactor.

The protein resides in the cytoplasm. The enzyme catalyses tRNA(Ile) + L-isoleucine + ATP = L-isoleucyl-tRNA(Ile) + AMP + diphosphate. Functionally, catalyzes the attachment of isoleucine to tRNA(Ile). As IleRS can inadvertently accommodate and process structurally similar amino acids such as valine, to avoid such errors it has two additional distinct tRNA(Ile)-dependent editing activities. One activity is designated as 'pretransfer' editing and involves the hydrolysis of activated Val-AMP. The other activity is designated 'posttransfer' editing and involves deacylation of mischarged Val-tRNA(Ile). The sequence is that of Isoleucine--tRNA ligase from Streptococcus pneumoniae (strain Hungary19A-6).